Here is a 142-residue protein sequence, read N- to C-terminus: Group IIE secretory phospholipase A2 (142 aa).

Residues 1–19 (MKPPIALACLCLLVPLAGG) form the signal peptide. Aspartate 41, glycine 43, tyrosine 45, glycine 47, and glycine 49 together coordinate Ca(2+). Intrachain disulfides connect cysteine 44–cysteine 135, cysteine 46–cysteine 62, cysteine 61–cysteine 115, cysteine 67–cysteine 142, cysteine 68–cysteine 108, cysteine 77–cysteine 101, and cysteine 95–cysteine 106. Residue histidine 65 is part of the active site. A Ca(2+)-binding site is contributed by aspartate 66. The active site involves aspartate 109. Residues tyrosine 130 and asparagine 132 each coordinate Ca(2+).

The protein belongs to the phospholipase A2 family. Ca(2+) is required as a cofactor. Highly expressed in skin and uterus, and at lower levels in various other tissues. Expressed in hair follicles, specifically localized in companion cells of the outer root sheath and cuticular cells of the inner root sheath in hair follicles during anagen. Expressed in white and brown adipose tissue.

The protein localises to the secreted. It localises to the cytoplasm. It catalyses the reaction a 1,2-diacyl-sn-glycero-3-phosphoethanolamine + H2O = a 1-acyl-sn-glycero-3-phosphoethanolamine + a fatty acid + H(+). It carries out the reaction 1-hexadecanoyl-2-(9Z-octadecenoyl)-sn-glycero-3-phosphoethanolamine + H2O = 1-hexadecanoyl-sn-glycero-3-phosphoethanolamine + (9Z)-octadecenoate + H(+). The enzyme catalyses 1-hexadecanoyl-2-(9Z,12Z-octadecadienoyl)-sn-glycero-3-phosphoethanolamine + H2O = 1-hexadecanoyl-sn-glycero-3-phosphoethanolamine + (9Z,12Z)-octadecadienoate + H(+). The catalysed reaction is 1-hexadecanoyl-2-(5Z,8Z,11Z,14Z-eicosatetraenoyl)-sn-glycero-3-phosphoethanolamine + H2O = 1-hexadecanoyl-sn-glycero-3-phosphoethanolamine + (5Z,8Z,11Z,14Z)-eicosatetraenoate + H(+). It catalyses the reaction 1,2-dihexadecanoyl-sn-glycero-3-phospho-(1'-sn-glycerol) + H2O = 1-hexadecanoyl-sn-glycero-3-phospho-(1'-sn-glycerol) + hexadecanoate + H(+). It carries out the reaction 1-hexadecanoyl-2-(9Z-octadecenoyl)-sn-glycero-3-phosphoglycerol + H2O = 1-hexadecanoyl-sn-glycero-3-phosphoglycerol + (9Z)-octadecenoate + H(+). The enzyme catalyses a 1,2-diacyl-sn-glycero-3-phosphocholine + H2O = a 1-acyl-sn-glycero-3-phosphocholine + a fatty acid + H(+). The catalysed reaction is 1,2-dihexadecanoyl-sn-glycero-3-phosphocholine + H2O = 1-hexadecanoyl-sn-glycero-3-phosphocholine + hexadecanoate + H(+). It catalyses the reaction 1-hexadecanoyl-2-(9Z-octadecenoyl)-sn-glycero-3-phosphocholine + H2O = 1-hexadecanoyl-sn-glycero-3-phosphocholine + (9Z)-octadecenoate + H(+). It carries out the reaction 1-hexadecanoyl-2-(9Z,12Z-octadecadienoyl)-sn-glycero-3-phosphocholine + H2O = (9Z,12Z)-octadecadienoate + 1-hexadecanoyl-sn-glycero-3-phosphocholine + H(+). The enzyme catalyses 1-hexadecanoyl-2-(4Z,7Z,10Z,13Z,16Z,19Z-docosahexaenoyl)-sn-glycero-3-phosphocholine + H2O = (4Z,7Z,10Z,13Z,16Z,19Z)-docosahexaenoate + 1-hexadecanoyl-sn-glycero-3-phosphocholine + H(+). Secretory calcium-dependent phospholipase A2 that primarily targets extracellular phospholipids. Hydrolyzes the ester bond of the fatty acyl group attached at sn-2 position of phospholipids (phospholipase A2 activity), releasing various unsaturated fatty acids including oleoate, linoleoate, arachidonate, docosahexaenoate and lysophosphatidylethanolamines in preference to lysophosphatidylcholines. In response to high-fat diet, hydrolyzes minor lipoprotein phospholipids including phosphatidylserines, phosphatidylinositols and phosphatidylglycerols, altering lipoprotein composition and fat storage in adipose tissue and liver. May act in an autocrine and paracrine manner. Contributes to lipid remodeling of cellular membranes and generation of lipid mediators involved in pathogen clearance. Cleaves sn-2 fatty acyl chains of phosphatidylglycerols and phosphatidylethanolamines, which are major components of membrane phospholipids in bacteria. Acts as a hair follicle phospholipase A2. Selectively releases lysophosphatidylethanolamines (LPE) and various unsaturated fatty acids in skin to regulate hair follicle homeostasis. May regulate the inflammatory response by releasing arachidonate, a precursor of prostaglandins and leukotrienes. Upon allergen exposure, may participate in allergic inflammatory response by enhancing leukotriene C4 synthesis and degranulation in mast cells. The polypeptide is Group IIE secretory phospholipase A2 (Pla2g2e) (Mus musculus (Mouse)).